The following is an 84-amino-acid chain: Putative glutaredoxin MT3292 (84 aa).

In terms of domain architecture, Glutaredoxin spans 1–84 (MITAALTIYT…VKAKLVKIAG (84 aa)).

The chain is Putative glutaredoxin MT3292 from Mycobacterium tuberculosis (strain CDC 1551 / Oshkosh).